The sequence spans 219 residues: U-scoloptoxin(11)-Sm7a (219 aa).

An N-terminal signal peptide occupies residues 1–15 (MYLFLMINYFVLANS).

The protein belongs to the scoloptoxin-11 family. In terms of processing, contains 8 disulfide bonds. Expressed by the venom gland.

The protein resides in the secreted. The protein is U-scoloptoxin(11)-Sm7a of Scolopendra morsitans (Tanzanian blue ringleg centipede).